The chain runs to 139 residues: Protein archease (139 aa).

The Ca(2+) site is built by aspartate 12, aspartate 138, and isoleucine 139.

It belongs to the archease family.

Its function is as follows. Activates the tRNA-splicing ligase complex by facilitating the enzymatic turnover of catalytic subunit RtcB. Acts by promoting the guanylylation of RtcB, a key intermediate step in tRNA ligation. Can also alter the NTP specificity of RtcB such that ATP, dGTP or ITP is used efficiently. This chain is Protein archease, found in Saccharolobus islandicus (strain M.16.27) (Sulfolobus islandicus).